The following is a 973-amino-acid chain: Peptidyl-glycine alpha-amidating monooxygenase (973 aa).

The N-terminal stretch at 1-20 is a signal peptide; that stretch reads MAGRVPSLLVLLVFPSSCLA. The tract at residues 1 to 494 is peptidylglycine alpha-hydroxylating monooxygenase; it reads MAGRVPSLLV…EGTWEPEHTG (494 aa). A propeptide spanning residues 21–30 is cleaved from the precursor; the sequence is FRSPLSVFKR. The Intragranular segment spans residues 31–863; the sequence is FKETTRPFSN…QKLIKEPGSG (833 aa). 5 cysteine pairs are disulfide-bonded: Cys-42–Cys-181, Cys-76–Cys-121, Cys-109–Cys-126, Cys-222–Cys-329, and Cys-288–Cys-310. 2 residues coordinate Cu(2+): His-102 and His-103. Cu(2+)-binding residues include His-167, His-237, His-239, and Met-309. The peptidyl-alpha-hydroxyglycine alpha-amidating lyase stretch occupies residues 495–817; it reads DFHMEEALDW…LTEKLEHRSV (323 aa). 4 NHL repeats span residues 498–541, 567–608, 617–662, and 670–714; these read MEEA…NSFD, AAVL…LDPN, LGRS…FSPS, and GEES…FKTD. A Ca(2+)-binding site is contributed by Val-517. Position 530 (Arg-530) interacts with a protein. A Zn(2+)-binding site is contributed by His-582. A Ca(2+)-binding site is contributed by Leu-584. Cys-631 and Cys-652 are oxidised to a cystine. Tyr-651 contacts a protein. His-687 provides a ligand contact to Zn(2+). A disulfide bridge connects residues Cys-699 and Cys-710. Arg-703 contacts a protein. Residue Asn-762 is glycosylated (N-linked (GlcNAc...) asparagine). One copy of the NHL 5 repeat lies at 766-809; it reads GEIIDIFKPVRKHFDMPHDIVASEDGTVYIGDAHTNTVWKFTLT. Residue His-783 coordinates Zn(2+). Asp-784 contributes to the Ca(2+) binding site. The helical transmembrane segment at 864-887 threads the bilayer; it reads VPVVLITTLLVIPVVVLLAIAIFI. A sulfotyrosine mark is found at Ile-875 and Arg-893. Over 888–973 the chain is Cytoplasmic; sequence RWKKSRAFGD…PLPALAPSSS (86 aa). A phosphoserine mark is found at Ser-918, Ser-929, and Ser-942. Residues 925-942 are interaction with RASSF9; the sequence is NFFASRKGYSRKGFDRLS. The segment at 937–973 is disordered; sequence GFDRLSTEGSDQEKEDDGSESEEEYSAPLPALAPSSS. At Thr-943 the chain carries Phosphothreonine. The residue at position 946 (Ser-946) is a Phosphoserine; by UHMK1; in vitro. Residues 949–961 are compositionally biased toward acidic residues; that stretch reads EKEDDGSESEEEY. Ser-957 is modified (phosphoserine). Residues 962–973 are compositionally biased toward low complexity; the sequence is SAPLPALAPSSS.

In the C-terminal section; belongs to the peptidyl-alpha-hydroxyglycine alpha-amidating lyase family. This sequence in the N-terminal section; belongs to the copper type II ascorbate-dependent monooxygenase family. As to quaternary structure, monomer. Interacts with RASSF9. The cofactor is Zn(2+). It depends on Cu(2+) as a cofactor.

It localises to the cytoplasmic vesicle. The protein localises to the secretory vesicle membrane. It is found in the membrane. Its subcellular location is the secreted. It carries out the reaction a [peptide]-C-terminal glycine + 2 L-ascorbate + O2 = a [peptide]-C-terminal (2S)-2-hydroxyglycine + 2 monodehydro-L-ascorbate radical + H2O. It catalyses the reaction a [peptide]-C-terminal (2S)-2-hydroxyglycine = a [peptide]-C-terminal amide + glyoxylate. The enzyme catalyses N-dodecanoylglycine + 2 L-ascorbate + O2 = N-dodecanoyl-(2S)-hydroxyglycine + 2 monodehydro-L-ascorbate radical + H2O. The catalysed reaction is N-dodecanoyl-(2S)-hydroxyglycine = dodecanamide + glyoxylate. It carries out the reaction N-(9Z,12Z,15Z)-octadecatrienoylglycine + 2 L-ascorbate + O2 = N-(9Z,12Z,15Z)-octadecatrienoyl-(2S)-hydroxyglycine + 2 monodehydro-L-ascorbate radical + H2O. It catalyses the reaction N-(9Z,12Z,15Z)-octadecatrienoyl-(2S)-hydroxyglycine = (9Z,12Z,15Z)-octadecatrienamide + glyoxylate. The enzyme catalyses N-(9Z-octadecenoyl)glycine + 2 L-ascorbate + O2 = N-(9Z-octadecenoyl)-(2S)-hydroxyglycine + 2 monodehydro-L-ascorbate radical + H2O. The catalysed reaction is N-(9Z-octadecenoyl)-(2S)-hydroxyglycine = (9Z)-octadecenamide + glyoxylate. It carries out the reaction N-tetradecanoylglycine + 2 L-ascorbate + O2 = N-tetradecanoyl-(2S)-hydroxyglycine + 2 monodehydro-L-ascorbate radical + H2O. It catalyses the reaction N-tetradecanoyl-(2S)-hydroxyglycine = tetradecamide + glyoxylate. The enzyme catalyses N-decanoylglycine + 2 L-ascorbate + O2 = N-decanoyl-(2S)-hydroxyglycine + 2 monodehydro-L-ascorbate radical + H2O. The catalysed reaction is N-decanoyl-(2S)-hydroxyglycine = decanamide + glyoxylate. It carries out the reaction N-octanoylglycine + 2 L-ascorbate + O2 = N-octanoyl-(2S)-hydroxyglycine + 2 monodehydro-L-ascorbate radical + H2O. It catalyses the reaction N-octanoyl-(2S)-hydroxyglycine = octanamide + glyoxylate. Its activity is regulated as follows. PAM activity is inhibited by EDTA, phenylglyoxal and diethyl pyrocarbonate. PAL activity is stimulated by cadmium and inhibited by mercury. Bifunctional enzyme that catalyzes amidation of the C-terminus of proteins. Alpha-amidation is present at the C-terminus of many endocrine hormones and neuropeptides and is required for their activity. C-terminal amidation also takes place in response to protein fragmentation triggered by oxidative stress, promoting degradation of amidated protein fragments by the proteasome. Alpha-amidation involves two sequential reactions, both of which are catalyzed by separate catalytic domains of the enzyme. The first step, catalyzed by peptidyl alpha-hydroxylating monooxygenase (PHM) domain, is the copper-, ascorbate-, and O2- dependent stereospecific hydroxylation (with S stereochemistry) at the alpha-carbon (C-alpha) of the C-terminal glycine of the peptidylglycine substrate. The second step, catalyzed by the peptidylglycine amidoglycolate lyase (PAL) domain, is the zinc-dependent cleavage of the N-C-alpha bond, producing the alpha-amidated peptide and glyoxylate. Similarly, catalyzes the two-step conversion of an N-fatty acylglycine to a primary fatty acid amide and glyoxylate. This is Peptidyl-glycine alpha-amidating monooxygenase from Homo sapiens (Human).